The sequence spans 385 residues: Chorismate synthase (385 aa).

Residues P43–D63 form a disordered region. The NADP(+) site is built by R48 and R54. Residues R125–S127, N238–A239, G278, K293–S297, and R319 each bind FMN. The segment covering A363–P372 has biased composition (low complexity). The segment at A363–A385 is disordered.

This sequence belongs to the chorismate synthase family. Homotetramer. Requires FMNH2 as cofactor.

It carries out the reaction 5-O-(1-carboxyvinyl)-3-phosphoshikimate = chorismate + phosphate. Its pathway is metabolic intermediate biosynthesis; chorismate biosynthesis; chorismate from D-erythrose 4-phosphate and phosphoenolpyruvate: step 7/7. Functionally, catalyzes the anti-1,4-elimination of the C-3 phosphate and the C-6 proR hydrogen from 5-enolpyruvylshikimate-3-phosphate (EPSP) to yield chorismate, which is the branch point compound that serves as the starting substrate for the three terminal pathways of aromatic amino acid biosynthesis. This reaction introduces a second double bond into the aromatic ring system. This Leptothrix cholodnii (strain ATCC 51168 / LMG 8142 / SP-6) (Leptothrix discophora (strain SP-6)) protein is Chorismate synthase.